The sequence spans 468 residues: UDP-N-acetylmuramate--L-alanine ligase (468 aa).

112–118 serves as a coordination point for ATP; it reads GTHGKTT.

This sequence belongs to the MurCDEF family.

The protein localises to the cytoplasm. It carries out the reaction UDP-N-acetyl-alpha-D-muramate + L-alanine + ATP = UDP-N-acetyl-alpha-D-muramoyl-L-alanine + ADP + phosphate + H(+). It participates in cell wall biogenesis; peptidoglycan biosynthesis. Cell wall formation. The sequence is that of UDP-N-acetylmuramate--L-alanine ligase from Bordetella bronchiseptica (strain ATCC BAA-588 / NCTC 13252 / RB50) (Alcaligenes bronchisepticus).